Reading from the N-terminus, the 326-residue chain is Protein-ribulosamine 3-kinase, chloroplastic (326 aa).

Residues 1–30 constitute a chloroplast transit peptide; it reads MAVASLSICFSARPHLLLRNFSPRPKFVAM. Position 125–127 (125–127) interacts with ATP; that stretch reads EFI. The active-site Proton acceptor is the D230.

This sequence belongs to the fructosamine kinase family.

The protein resides in the plastid. Its subcellular location is the chloroplast. It carries out the reaction N(6)-D-ribulosyl-L-lysyl-[protein] + ATP = N(6)-(3-O-phospho-D-ribulosyl)-L-lysyl-[protein] + ADP + H(+). It catalyses the reaction N(6)-(D-erythrulosyl)-L-lysyl-[protein] + ATP = N(6)-(3-O-phospho-D-erythrulosyl)-L-lysyl-[protein] + ADP + H(+). Functionally, initiates a process leading to the deglycation of proteins. Phosphorylates low-molecular-mass and protein-bound erythrulosamines and ribulosamines, but not fructosamines or psicosamines, on the third carbon of the sugar moiety. Protein-bound erythrulosamine 3-phosphates and ribulosamine 3-phosphates are unstable and decompose under physiological conditions. The chain is Protein-ribulosamine 3-kinase, chloroplastic from Arabidopsis thaliana (Mouse-ear cress).